Here is a 559-residue protein sequence, read N- to C-terminus: T-complex protein 1 subunit gamma (559 aa).

Cysteines 369 and 375 form a disulfide. The segment at glycine 537–glycine 559 is disordered.

This sequence belongs to the TCP-1 chaperonin family. In terms of assembly, heterooligomeric complex of about 850 to 900 kDa that forms two stacked rings, 12 to 16 nm in diameter.

Its subcellular location is the cytoplasm. Molecular chaperone; assists the folding of proteins upon ATP hydrolysis. Known to play a role, in vitro, in the folding of actin and tubulin. The polypeptide is T-complex protein 1 subunit gamma (Tetrahymena pyriformis).